Consider the following 748-residue polypeptide: Phosphoribosylformylglycinamidine synthase subunit PurL (748 aa).

Residue His-47 is part of the active site. Tyr-50 and Lys-90 together coordinate ATP. Position 92 (Glu-92) interacts with Mg(2+). Substrate-binding positions include 93–96 (SHNH) and Arg-115. Residue His-94 is the Proton acceptor of the active site. Asp-116 lines the Mg(2+) pocket. Gln-240 serves as a coordination point for substrate. Asp-268 serves as a coordination point for Mg(2+). 312–314 (ESQ) is a binding site for substrate. ATP-binding residues include Asn-500 and Gly-537. Residue Asn-538 participates in Mg(2+) binding. Ser-540 is a binding site for substrate.

This sequence belongs to the FGAMS family. In terms of assembly, monomer. Part of the FGAM synthase complex composed of 1 PurL, 1 PurQ and 2 PurS subunits.

It is found in the cytoplasm. The enzyme catalyses N(2)-formyl-N(1)-(5-phospho-beta-D-ribosyl)glycinamide + L-glutamine + ATP + H2O = 2-formamido-N(1)-(5-O-phospho-beta-D-ribosyl)acetamidine + L-glutamate + ADP + phosphate + H(+). It functions in the pathway purine metabolism; IMP biosynthesis via de novo pathway; 5-amino-1-(5-phospho-D-ribosyl)imidazole from N(2)-formyl-N(1)-(5-phospho-D-ribosyl)glycinamide: step 1/2. Functionally, part of the phosphoribosylformylglycinamidine synthase complex involved in the purines biosynthetic pathway. Catalyzes the ATP-dependent conversion of formylglycinamide ribonucleotide (FGAR) and glutamine to yield formylglycinamidine ribonucleotide (FGAM) and glutamate. The FGAM synthase complex is composed of three subunits. PurQ produces an ammonia molecule by converting glutamine to glutamate. PurL transfers the ammonia molecule to FGAR to form FGAM in an ATP-dependent manner. PurS interacts with PurQ and PurL and is thought to assist in the transfer of the ammonia molecule from PurQ to PurL. The chain is Phosphoribosylformylglycinamidine synthase subunit PurL from Leptospira biflexa serovar Patoc (strain Patoc 1 / Ames).